A 359-amino-acid polypeptide reads, in one-letter code: Molybdenum import ATP-binding protein ModC (359 aa).

The region spanning 1-233 (MSGLTVSIRG…IDAESEGGGV (233 aa)) is the ABC transporter domain. ATP is bound at residue 32–39 (GHSGAGKT). Residues 289-355 (AISIRNLLPV…VKAVSVDRAA (67 aa)) enclose the Mop domain.

The protein belongs to the ABC transporter superfamily. Molybdate importer (TC 3.A.1.8) family. As to quaternary structure, the complex is composed of two ATP-binding proteins (ModC), two transmembrane proteins (ModB) and a solute-binding protein (ModA).

Its subcellular location is the cell inner membrane. It catalyses the reaction molybdate(out) + ATP + H2O = molybdate(in) + ADP + phosphate + H(+). Functionally, part of the ABC transporter complex ModABC involved in molybdenum import. Responsible for energy coupling to the transport system. The sequence is that of Molybdenum import ATP-binding protein ModC from Brucella abortus (strain 2308).